The sequence spans 360 residues: Photosystem II protein D1 3 (360 aa).

3 helical membrane-spanning segments follow: residues 29-46, 118-133, and 142-156; these read YVGW…AATV, HFLI…QWEL, and WICV…SATA. Residue histidine 118 coordinates chlorophyll a. Tyrosine 126 provides a ligand contact to pheophytin a. 2 residues coordinate [CaMn4O5] cluster: aspartate 170 and glutamate 189. A helical membrane pass occupies residues 197-218; it reads FHMLGVAGVFGGSLFSAMHGSL. Histidine 198 provides a ligand contact to chlorophyll a. A quinone-binding positions include histidine 215 and 264–265; that span reads SF. A Fe cation-binding site is contributed by histidine 215. Residue histidine 272 coordinates Fe cation. Residues 274–288 traverse the membrane as a helical segment; sequence FLAAWPVIGIWFTAL. Residues histidine 332, glutamate 333, aspartate 342, and alanine 344 each contribute to the [CaMn4O5] cluster site. A propeptide spanning residues 345–360 is cleaved from the precursor; sequence AGEVAPVALTAPAING.

This sequence belongs to the reaction center PufL/M/PsbA/D family. As to quaternary structure, PSII is composed of 1 copy each of membrane proteins PsbA, PsbB, PsbC, PsbD, PsbE, PsbF, PsbH, PsbI, PsbJ, PsbK, PsbL, PsbM, PsbT, PsbX, PsbY, PsbZ, Psb30/Ycf12, peripheral proteins PsbO, CyanoQ (PsbQ), PsbU, PsbV and a large number of cofactors. It forms dimeric complexes. The D1/D2 heterodimer binds P680, chlorophylls that are the primary electron donor of PSII, and subsequent electron acceptors. It shares a non-heme iron and each subunit binds pheophytin, quinone, additional chlorophylls, carotenoids and lipids. D1 provides most of the ligands for the Mn4-Ca-O5 cluster of the oxygen-evolving complex (OEC). There is also a Cl(-1) ion associated with D1 and D2, which is required for oxygen evolution. The PSII complex binds additional chlorophylls, carotenoids and specific lipids. serves as cofactor. In terms of processing, tyr-161 forms a radical intermediate that is referred to as redox-active TyrZ, YZ or Y-Z. Post-translationally, C-terminally processed by CtpA; processing is essential to allow assembly of the oxygen-evolving complex and thus photosynthetic growth.

The protein resides in the cellular thylakoid membrane. It carries out the reaction 2 a plastoquinone + 4 hnu + 2 H2O = 2 a plastoquinol + O2. Its function is as follows. Photosystem II (PSII) is a light-driven water:plastoquinone oxidoreductase that uses light energy to abstract electrons from H(2)O, generating O(2) and a proton gradient subsequently used for ATP formation. It consists of a core antenna complex that captures photons, and an electron transfer chain that converts photonic excitation into a charge separation. The D1/D2 (PsbA/PsbD) reaction center heterodimer binds P680, the primary electron donor of PSII as well as several subsequent electron acceptors. This Trichormus variabilis (strain ATCC 29413 / PCC 7937) (Anabaena variabilis) protein is Photosystem II protein D1 3.